A 255-amino-acid chain; its full sequence is 5'-nucleotidase SurE (255 aa).

A divalent metal cation is bound by residues Asp-8, Asp-9, Ser-40, and Asn-92.

The protein belongs to the SurE nucleotidase family. It depends on a divalent metal cation as a cofactor.

It is found in the cytoplasm. It carries out the reaction a ribonucleoside 5'-phosphate + H2O = a ribonucleoside + phosphate. Nucleotidase that shows phosphatase activity on nucleoside 5'-monophosphates. In Brucella abortus (strain S19), this protein is 5'-nucleotidase SurE.